An 874-amino-acid chain; its full sequence is Putative disease resistance protein At5g05400 (874 aa).

A coiled-coil region spans residues 22-74 (LSRNQNRFRNLVDHVAALKKTVRQLEARRDDLLKRIKVQEDRGLNLLDEVQQW). Positions 139 to 434 (AQKGPIPKVE…GQGIILGSKG (296 aa)) constitute an NB-ARC domain. 182 to 189 (GMGGVGKT) is a binding site for ATP. 7 LRR repeats span residues 483 to 505 (QKNVLVVEANAQLRDIPKIEDQK), 506 to 527 (AVRRMSLIYNQIEEACESLHCP), 528 to 548 (KLETLLLRDNRLRKISREFLS), 552 to 574 (ILMVLDLSLNPNLIELPSFSPLY), 575 to 597 (SLRFLNLSCTGITSLPDGLYALR), 598 to 620 (NLLYLNLEHTYMLKRIYEIHDLP), and 621 to 642 (NLEVLKLYASGIDITDKLVRQI).

It belongs to the disease resistance NB-LRR family.

Functionally, potential disease resistance protein. In Arabidopsis thaliana (Mouse-ear cress), this protein is Putative disease resistance protein At5g05400.